A 295-amino-acid chain; its full sequence is Aquaporin-9 (295 aa).

At 1–24 (MQPEGAEKGKSFKQRLVLKSSLAK) the chain is on the cytoplasmic side. A helical transmembrane segment spans residues 25 to 43 (ETLSEFLGTFILIVLGCGC). At 44–57 (VAQAILSRGRFGGV) the chain is on the extracellular side. The helical transmembrane segment at 58–77 (ITINVGFSMAVAMAIYVAGG) threads the bilayer. At 78–79 (VS) the chain is on the cytoplasmic side. Residues 80–92 (GGHINPAVSLAMC) constitute an intramembrane region (discontinuously helical). The NPA 1 signature appears at 84–86 (NPA). Residues 93-98 (LFGRMK) are Cytoplasmic-facing. A helical transmembrane segment spans residues 99 to 123 (WFKLPFYVGAQFLGAFVGAATVFGI). Residues 124-160 (YYDGLMSFAGGKLLIVGENATAHIFATYPAPYLSLAN) lie on the Extracellular side of the membrane. The helical transmembrane segment at 161 to 178 (AFADQVVATMILLIIVFA) threads the bilayer. Topologically, residues 179–190 (IFDSRNLGAPRG) are cytoplasmic. The chain crosses the membrane as a helical span at residues 191–207 (LEPIAIGLLIIVIASSL). Residues 208-210 (GLN) lie on the Extracellular side of the membrane. Residues 211–225 (SGCAMNPARDLSPRL) constitute an intramembrane region (discontinuously helical). The short motif at 216–218 (NPA) is the NPA 2 element. The Extracellular segment spans residues 226–243 (FTALAGWGFEVFRAGNNF). The helical transmembrane segment at 244–264 (WWIPVVGPLVGAVIGGLIYVL) threads the bilayer. Residues 265–295 (VIEIHHPEPDSVFKTEQSEDKPEKYELSVIM) are Cytoplasmic-facing.

Belongs to the MIP/aquaporin (TC 1.A.8) family. Homotetramer; each monomer provides an independent glycerol/water pore. As to expression, highly expressed in peripheral leukocytes. Also expressed in liver, lung, and spleen.

Its subcellular location is the cell membrane. The protein localises to the basolateral cell membrane. It catalyses the reaction glycerol(in) = glycerol(out). The catalysed reaction is H2O(in) = H2O(out). The enzyme catalyses urea(in) = urea(out). It carries out the reaction (S)-lactate(in) = (S)-lactate(out). It catalyses the reaction NH4(+)(in) = NH4(+)(out). The catalysed reaction is uracil(in) = uracil(out). The enzyme catalyses adenine(out) = adenine(in). It carries out the reaction 3-hydroxybutanoate(in) = 3-hydroxybutanoate(out). It catalyses the reaction D-sorbitol(in) = D-sorbitol(out). The catalysed reaction is D-mannitol(in) = D-mannitol(out). The enzyme catalyses H2O2(out) = H2O2(in). It carries out the reaction arsenite(in) = arsenite(out). It catalyses the reaction selenite(in) = selenite(out). Aquaglyceroporins form homotetrameric transmembrane channels, with each monomer independently mediating glycerol and water transport across the plasma membrane along their osmotic gradient. AQP9 is the primary route for glycerol uptake in hepatocytes, supporting hepatic gluconeogenesis. It exhibits broad specificity and may transport various small, non-charged solutes, including carbamides, polyols, purines, and pyrimidines. AQP9 may also facilitate hepatic urea extrusion. Due to its permeability to lactate, AQP9 might participate in the astrocyte-to-neuron lactate shuttle, supplying neurons with energy. Additionally, AQP9 is permeable to arsenite, contributing to arsenic excretion by the liver and providing partial protection against arsenic toxicity. It is also permeable to H2O2 in vivo. Could also be permeable to ammonium. This is Aquaporin-9 from Homo sapiens (Human).